Consider the following 221-residue polypeptide: Translation initiation factor 6 (221 aa).

Belongs to the eIF-6 family.

In terms of biological role, binds to the 50S ribosomal subunit and prevents its association with the 30S ribosomal subunit to form the 70S initiation complex. This is Translation initiation factor 6 from Natronomonas pharaonis (strain ATCC 35678 / DSM 2160 / CIP 103997 / JCM 8858 / NBRC 14720 / NCIMB 2260 / Gabara) (Halobacterium pharaonis).